A 233-amino-acid polypeptide reads, in one-letter code: Glucosamine-6-phosphate deaminase (233 aa).

Asp-62 (proton acceptor; for enolization step) is an active-site residue. Asn-128 functions as the For ring-opening step in the catalytic mechanism. His-130 (proton acceptor; for ring-opening step) is an active-site residue. Glu-135 serves as the catalytic For ring-opening step.

Belongs to the glucosamine/galactosamine-6-phosphate isomerase family. NagB subfamily.

It carries out the reaction alpha-D-glucosamine 6-phosphate + H2O = beta-D-fructose 6-phosphate + NH4(+). Its pathway is amino-sugar metabolism; N-acetylneuraminate degradation; D-fructose 6-phosphate from N-acetylneuraminate: step 5/5. Catalyzes the reversible isomerization-deamination of glucosamine 6-phosphate (GlcN6P) to form fructose 6-phosphate (Fru6P) and ammonium ion. The chain is Glucosamine-6-phosphate deaminase from Enterococcus faecalis (strain ATCC 700802 / V583).